Here is a 366-residue protein sequence, read N- to C-terminus: 3-dehydroquinate synthase (366 aa).

Residues 69 to 74, 103 to 107, 127 to 128, Lys-140, Lys-149, and 167 to 170 contribute to the NAD(+) site; these read DGEAHK, GVIGD, TT, and TLNT. Residues Glu-182, His-245, and His-262 each contribute to the Zn(2+) site.

The protein belongs to the sugar phosphate cyclases superfamily. Dehydroquinate synthase family. Co(2+) is required as a cofactor. It depends on Zn(2+) as a cofactor. The cofactor is NAD(+).

Its subcellular location is the cytoplasm. It carries out the reaction 7-phospho-2-dehydro-3-deoxy-D-arabino-heptonate = 3-dehydroquinate + phosphate. It functions in the pathway metabolic intermediate biosynthesis; chorismate biosynthesis; chorismate from D-erythrose 4-phosphate and phosphoenolpyruvate: step 2/7. Catalyzes the conversion of 3-deoxy-D-arabino-heptulosonate 7-phosphate (DAHP) to dehydroquinate (DHQ). The protein is 3-dehydroquinate synthase of Pseudomonas fluorescens (strain SBW25).